A 1317-amino-acid chain; its full sequence is ABC transporter C family member 14 (1317 aa).

In terms of domain architecture, ABC transmembrane type-1 1 spans 119-404 (NKYALISNIF…LPEDIYKAIG (286 aa)). Helical transmembrane passes span 127–147 (IFIT…INYI), 156–176 (SILK…GQSI), 249–269 (ILIL…VGFG), 341–361 (VLFW…VLVS), and 375–395 (LDVT…LIYL). The interval 426–451 (ENNQNINFNNNNNNNNNNKNNNNNDD) is disordered. Low complexity predominate over residues 427–449 (NNQNINFNNNNNNNNNNKNNNNN). The ABC transporter 1 domain occupies 490–710 (ENEENIKINE…ISDKNDPNLI (221 aa)). Residue 522–529 (GVVGSGKT) participates in ATP binding. The next 5 membrane-spanning stretches (helical) occupy residues 734-754 (YFSY…FFIG), 778-798 (DSFY…LLMI), 871-891 (LISI…LFII), 969-989 (LEVM…LFTS), and 992-1012 (GLAA…SWGV). In terms of domain architecture, ABC transmembrane type-1 2 spans 744-1027 (LFITISLFFI…LEVKMNSFQR (284 aa)). Residues 1071-1306 (IEFKNVEIKY…PNSKFNKLIK (236 aa)) form the ABC transporter 2 domain. 1105–1112 (GRTGAGKT) contributes to the ATP binding site.

Belongs to the ABC transporter superfamily. ABCC family. Conjugate transporter (TC 3.A.1.208) subfamily.

It localises to the membrane. The chain is ABC transporter C family member 14 (abcC14) from Dictyostelium discoideum (Social amoeba).